A 498-amino-acid polypeptide reads, in one-letter code: NADH-quinone oxidoreductase subunit N 2 (498 aa).

The next 14 membrane-spanning stretches (helical) occupy residues 19-39 (VATQ…IALF), 47-67 (IVGY…IPLW), 83-103 (YSLT…VLSL), 114-134 (SEYY…AQGA), 136-156 (LIIL…LTGF), 171-191 (LLIG…LYGA), 215-235 (IYLL…VAMA), 249-269 (PTPI…AALL), 282-302 (IWAP…NIGA), 317-337 (IGHA…GGIA), 345-365 (VLLY…VLIA), 389-409 (LAVA…TGGF), 420-440 (WLSG…IAAF), and 468-488 (AGLA…TPAI).

Belongs to the complex I subunit 2 family. In terms of assembly, NDH-1 is composed of 14 different subunits. Subunits NuoA, H, J, K, L, M, N constitute the membrane sector of the complex.

The protein localises to the cell membrane. The enzyme catalyses a quinone + NADH + 5 H(+)(in) = a quinol + NAD(+) + 4 H(+)(out). In terms of biological role, NDH-1 shuttles electrons from NADH, via FMN and iron-sulfur (Fe-S) centers, to quinones in the respiratory chain. The immediate electron acceptor for the enzyme in this species is believed to be ubiquinone. Couples the redox reaction to proton translocation (for every two electrons transferred, four hydrogen ions are translocated across the cytoplasmic membrane), and thus conserves the redox energy in a proton gradient. This is NADH-quinone oxidoreductase subunit N 2 from Roseiflexus castenholzii (strain DSM 13941 / HLO8).